The primary structure comprises 318 residues: UDP-N-acetylenolpyruvoylglucosamine reductase (318 aa).

The FAD-binding PCMH-type domain occupies 38 to 204 (IGGICPVVVE…LGIEILLKEG (167 aa)). Residue R182 is part of the active site. The disordered stretch occupies residues 212–232 (SLKDKRDRRNSSQPENKKSAG). The segment covering 213–229 (LKDKRDRRNSSQPENKK) has biased composition (basic and acidic residues). S233 (proton donor) is an active-site residue. The active site involves E310.

Belongs to the MurB family. FAD is required as a cofactor.

Its subcellular location is the cytoplasm. It carries out the reaction UDP-N-acetyl-alpha-D-muramate + NADP(+) = UDP-N-acetyl-3-O-(1-carboxyvinyl)-alpha-D-glucosamine + NADPH + H(+). Its pathway is cell wall biogenesis; peptidoglycan biosynthesis. Cell wall formation. The protein is UDP-N-acetylenolpyruvoylglucosamine reductase of Leptospira borgpetersenii serovar Hardjo-bovis (strain JB197).